Reading from the N-terminus, the 835-residue chain is Protein translocase subunit SecA (835 aa).

Residues Q85, 103–107 (GEGKT), and D492 each bind ATP. The tract at residues 788 to 807 (VQGEAVHPSSDGEEAKKKPV) is disordered. The Zn(2+) site is built by C819, C821, C830, and C831.

Belongs to the SecA family. As to quaternary structure, monomer and homodimer. Part of the essential Sec protein translocation apparatus which comprises SecA, SecYEG and auxiliary proteins SecDF. Other proteins may also be involved. Requires Zn(2+) as cofactor.

It is found in the cell membrane. The protein resides in the cytoplasm. It carries out the reaction ATP + H2O + cellular proteinSide 1 = ADP + phosphate + cellular proteinSide 2.. Part of the Sec protein translocase complex. Interacts with the SecYEG preprotein conducting channel. Has a central role in coupling the hydrolysis of ATP to the transfer of proteins into and across the cell membrane, serving as an ATP-driven molecular motor driving the stepwise translocation of polypeptide chains across the membrane. The chain is Protein translocase subunit SecA from Bacillus cereus (strain ATCC 10987 / NRS 248).